A 337-amino-acid polypeptide reads, in one-letter code: Phosphoenolpyruvate transferase (337 aa).

Asp-69 provides a ligand contact to 7,8-didemethyl-8-hydroxy-5-deazariboflavin.

The protein belongs to the CofD family. Homodimer. It depends on Mg(2+) as a cofactor.

It catalyses the reaction enolpyruvoyl-2-diphospho-5'-guanosine + 7,8-didemethyl-8-hydroxy-5-deazariboflavin = dehydro coenzyme F420-0 + GMP + H(+). It participates in cofactor biosynthesis; coenzyme F420 biosynthesis. In terms of biological role, catalyzes the transfer of the phosphoenolpyruvate moiety from enoylpyruvoyl-2-diphospho-5'-guanosine (EPPG) to 7,8-didemethyl-8-hydroxy-5-deazariboflavin (FO) with the formation of dehydro coenzyme F420-0 and GMP. The protein is Phosphoenolpyruvate transferase of Mycobacterium avium (strain 104).